Here is a 437-residue protein sequence, read N- to C-terminus: O-antigen export system ATP-binding protein RfbB (437 aa).

The 220-residue stretch at 37–256 folds into the ABC transporter domain; that stretch reads LRGKRQSRDA…YREAISLAEA (220 aa). 69-76 is a binding site for ATP; sequence GRNGSGKS.

It belongs to the ABC transporter superfamily.

It is found in the cell inner membrane. May form an ATP-driven O-antigen export apparatus, in association with RfbA. The polypeptide is O-antigen export system ATP-binding protein RfbB (rfbB) (Myxococcus xanthus).